A 1116-amino-acid chain; its full sequence is MAADIGSQSSGSLEERFEQSLHLQNVDKQDWSLNSVLQFLKLYKFNKEWEDVFIKSRIEMDLFINLADQSKAEEFAFKNKLSKESAIQLSSCIRKTLLAPSSTRVPSKNSSYETLTYSAKDSSDDVFTETNSGFRSSNQNSSLKSFQSVPDSNVNVFGGFGGSVVDNNELLSTGKNSHQTTSLNLEGSPINLHAYKGTVTSIINDDSRNINKKTLSKQPVSEHKEKQTSFLRRFRVPGFSRDKDKTKDCPSSNSNPFHLASSNVKTLDASLDQGEWVPRIHRLESQIGLISKKKSFVLATMDDMKFTVVDITNVQNATQLRKLIAKSMYLDISIDQFDLFLTEVGGAQYIEILDDRKLDIARLYSDEFGTIKFFVKPSQNEESGMDSDTYLSFGTKSSSTYKADDDSIYHRKEDFKKQPSYPVLTSDFEITDAGPNLSLSGHQPDNKYYKGFSSAPNLAVVPELPSRRFRGFEKIRGAKGEMATKILDATEAQSEKNKFTVCRPHKKVTLKMPLNSGSSAPQSPSSNTSASVLTRNFVAHRDPPPPPTETSSLRRKNTLTRRPSIRHARSSPYIDTGHNEASKFSHTSFDPKASSKSSNSLKESVEALSEIPFEDAPALDESDLSGDPFWAIQPKQSSSQVPKENHHNIQSKLSINTEAATDLKANELSSPKTPEYCRGDDRSISLSPLSYRLRKSKHIRESPPSSKVINSGNWEVRPSADDLYEDVDRFFPRYDLDKVLVVDQSRMVSSPSKVSIRPKMKSVRLLAREASEARKEIRHNARRNKSGNLLRRSSTKLWGSRIVELKPDTTITSGSVVSQNATFKWMKGELIGNGTYGKVFLAMNINTGELIAVKQVEIPQTINGRHDQLRKDIVDSINAEISMIADLDHLNIVQYLGFEKTETDISIFLEYVSGGSIGRCLRNYGPFEEQLVRFVSRQVLYGLSYLHSKGIIHRDLKADNLLIDFDGVCKISDFGISKHSDNVYDNDANLSMQGSIFWMAPEVIHNDHQGYSAKVDVWSLGCVVLEMLAGRRPWSTDEAIQAMFKLGTEKKAPPIPSELVSQVSPEAIQFLNACFTVNADVRPTAEELLNHPFMKCDEEFNFKDTNLYDMLCKRKS.

Disordered regions lie at residues 510–601 (LKMP…SNSL) and 618–647 (ALDE…ENHH). The span at 515 to 531 (NSGSSAPQSPSSNTSAS) shows a compositional bias: low complexity. A compositionally biased stretch (basic residues) spans 553–569 (LRRKNTLTRRPSIRHAR). A compositionally biased stretch (low complexity) spans 588–601 (SFDPKASSKSSNSL). A compositionally biased stretch (polar residues) spans 634–647 (PKQSSSQVPKENHH). In terms of domain architecture, Protein kinase spans 825–1094 (WMKGELIGNG…AEELLNHPFM (270 aa)). ATP contacts are provided by residues 831-839 (IGNGTYGKV) and Lys854. Residue Asp955 is the Proton acceptor of the active site.

The protein belongs to the protein kinase superfamily. STE Ser/Thr protein kinase family. MAP kinase kinase kinase subfamily.

The enzyme catalyses L-seryl-[protein] + ATP = O-phospho-L-seryl-[protein] + ADP + H(+). It catalyses the reaction L-threonyl-[protein] + ATP = O-phospho-L-threonyl-[protein] + ADP + H(+). In terms of biological role, may regulate cell morphology, cell wall integrity, salt resistance, cell cycle reentry from stationary-phase arrest, and filamentous growth in response to stress. Activates the MAP kinase kinase skh1/pek1 by phosphorylation. This Schizosaccharomyces pombe (strain 972 / ATCC 24843) (Fission yeast) protein is MAP kinase kinase kinase mkh1 (mkh1).